Here is a 108-residue protein sequence, read N- to C-terminus: Ig kappa chain V-V region HP 123E6 (108 aa).

Positions 1-23 (DIQMTQSTSSLSASLGDRVTISC) are framework-1. C23 and C88 are disulfide-bonded. The tract at residues 24-34 (RASQDISNYLN) is complementarity-determining-1. The tract at residues 35 to 49 (WYQQKPDGTVKLLIY) is framework-2. The interval 50–56 (YTSRLHS) is complementarity-determining-2. Positions 57-88 (GVPSRFSGSGSGTDYSLTISNLEQEDIATYFC) are framework-3. The interval 89–97 (QQGYMLPRT) is complementarity-determining-3. The interval 98-108 (FGGGTKLEIKR) is framework-4.

The chain is Ig kappa chain V-V region HP 123E6 from Mus musculus (Mouse).